The chain runs to 185 residues: Ribosome-recycling factor (185 aa).

This sequence belongs to the RRF family.

Its subcellular location is the cytoplasm. Responsible for the release of ribosomes from messenger RNA at the termination of protein biosynthesis. May increase the efficiency of translation by recycling ribosomes from one round of translation to another. This chain is Ribosome-recycling factor, found in Geobacter metallireducens (strain ATCC 53774 / DSM 7210 / GS-15).